The sequence spans 1509 residues: ABC transporter G family member 5 (1509 aa).

Basic and acidic residues predominate over residues 1-10 (MVKQDPRDKS). Residues 1–70 (MVKQDPRDKS…NNNNNNIKHK (70 aa)) form a disordered region. A compositionally biased stretch (polar residues) spans 11 to 28 (SYSPNLSIPINNQEEPTL). Residues 29 to 66 (NNNNNNNNNNNNNNNNNNNNNNNNNNNNNNNKNNNNNN) show a composition bias toward low complexity. The region spanning 129–376 (VYCRNATYTV…FKKLGFACPS (248 aa)) is the ABC transporter 1 domain. 168–175 (GTPGCGKS) is an ATP binding site. An ABC transmembrane type-2 1 domain is found at 472 to 748 (SRNYYNFATR…SVCFFALKYL (277 aa)). A run of 7 helical transmembrane segments spans residues 477–497 (NFATRVFKGIFFGLLLGTLYW), 512–532 (LLFFIMTTIIFSSFAAVNSFF), 557–577 (IICDIPAGLIEVAFFGPIVYW), 583–603 (PVFIRFVYFMILLFITDNLSL), 616–636 (IEIANVTASVILSIWLLFSGF), 643–663 (IGGWWIWLYYISPYTWIFQGL), and 725–745 (IVYAILGAYIVFFYSVCFFAL). Over residues 813–831 (PLTSPNYNNNNNLSGSGNN) the composition is skewed to low complexity. Positions 813–881 (PLTSPNYNNN…PISTSQKDIS (69 aa)) are disordered. The segment covering 839–881 (TPSTLSPMVNSPLTNLSPMVNTPSKNGNHSKQKPISTSQKDIS) has biased composition (polar residues). The region spanning 888–1141 (LQFKKLCYAV…VILDYCDKLG (254 aa)) is the ABC transporter 2 domain. ATP is bound at residue 935–942 (GPSGAGKS). An ABC transmembrane type-2 2 domain is found at 1231-1504 (LRRPAIFVSN…GLSFWGFKKV (274 aa)). Helical transmembrane passes span 1236-1256 (IFVSNCLRSILLAVLLGTLFV), 1271-1291 (LLFFSFLFAGMVAIGNIPTTV), 1320-1340 (YPFILSTGILYIIPTFWIAGL), 1352-1372 (CLFIFIITYIMYDAFALCLAV), 1379-1399 (MASTICGIGLSLATLFGGFVI), and 1481-1501 (IDIAAIFGYIFIFVGLSFWGF).

It belongs to the ABC transporter superfamily. ABCG family. PDR (TC 3.A.1.205) subfamily.

It is found in the membrane. The sequence is that of ABC transporter G family member 5 (abcG5) from Dictyostelium discoideum (Social amoeba).